The primary structure comprises 156 residues: ATP synthase subunit b (156 aa).

Residues 7–29 (LLGQAIAFFFFVTFCMKYVWPPL) form a helical membrane-spanning segment.

The protein belongs to the ATPase B chain family. F-type ATPases have 2 components, F(1) - the catalytic core - and F(0) - the membrane proton channel. F(1) has five subunits: alpha(3), beta(3), gamma(1), delta(1), epsilon(1). F(0) has three main subunits: a(1), b(2) and c(10-14). The alpha and beta chains form an alternating ring which encloses part of the gamma chain. F(1) is attached to F(0) by a central stalk formed by the gamma and epsilon chains, while a peripheral stalk is formed by the delta and b chains.

The protein resides in the cell inner membrane. Functionally, f(1)F(0) ATP synthase produces ATP from ADP in the presence of a proton or sodium gradient. F-type ATPases consist of two structural domains, F(1) containing the extramembraneous catalytic core and F(0) containing the membrane proton channel, linked together by a central stalk and a peripheral stalk. During catalysis, ATP synthesis in the catalytic domain of F(1) is coupled via a rotary mechanism of the central stalk subunits to proton translocation. In terms of biological role, component of the F(0) channel, it forms part of the peripheral stalk, linking F(1) to F(0). In Photobacterium profundum (strain SS9), this protein is ATP synthase subunit b.